The following is a 182-amino-acid chain: Probable nicotinate-nucleotide adenylyltransferase (182 aa).

The protein belongs to the NadD family.

It carries out the reaction nicotinate beta-D-ribonucleotide + ATP + H(+) = deamido-NAD(+) + diphosphate. The protein operates within cofactor biosynthesis; NAD(+) biosynthesis; deamido-NAD(+) from nicotinate D-ribonucleotide: step 1/1. Functionally, catalyzes the reversible adenylation of nicotinate mononucleotide (NaMN) to nicotinic acid adenine dinucleotide (NaAD). The chain is Probable nicotinate-nucleotide adenylyltransferase from Sulfurimonas denitrificans (strain ATCC 33889 / DSM 1251) (Thiomicrospira denitrificans (strain ATCC 33889 / DSM 1251)).